A 332-amino-acid polypeptide reads, in one-letter code: Phosphate acyltransferase (332 aa).

Belongs to the PlsX family. In terms of assembly, homodimer. Probably interacts with PlsY.

The protein resides in the cytoplasm. The catalysed reaction is a fatty acyl-[ACP] + phosphate = an acyl phosphate + holo-[ACP]. Its pathway is lipid metabolism; phospholipid metabolism. Functionally, catalyzes the reversible formation of acyl-phosphate (acyl-PO(4)) from acyl-[acyl-carrier-protein] (acyl-ACP). This enzyme utilizes acyl-ACP as fatty acyl donor, but not acyl-CoA. In Oceanobacillus iheyensis (strain DSM 14371 / CIP 107618 / JCM 11309 / KCTC 3954 / HTE831), this protein is Phosphate acyltransferase.